The sequence spans 223 residues: Small ribosomal subunit protein uS3 (223 aa).

In terms of domain architecture, KH type-2 spans 40-108 (IRELVHRELP…KVHLNIQEIR (69 aa)).

It belongs to the universal ribosomal protein uS3 family. Part of the 30S ribosomal subunit. Forms a tight complex with proteins S10 and S14.

Its function is as follows. Binds the lower part of the 30S subunit head. Binds mRNA in the 70S ribosome, positioning it for translation. This Thermomicrobium roseum (strain ATCC 27502 / DSM 5159 / P-2) protein is Small ribosomal subunit protein uS3.